The following is a 309-amino-acid chain: MVKVYAPASSANMSVGFDVLGAAVTPVDGTLLGDVVSVEAADHFRLHNLGRFADKLPPEPRENIVYQCWERFCQALGKTIPVAMTLEKNMPIGSGLGSSACSVAAALVAMNEHCGKPLNDTRLLALMGELEGRISGSIHYDNVAPCFLGGMQLMIEENGIISQQVPGFDEWLWVLAYPGIKVSTAEARAILPAQYRRQDCIAHGRHLAGFIHACYSRQPQLAAALMKDVIAEPYRARLLPGFSQARQAVSEIGALASGISGSGPTLFALCDKPETAQRVADWLSKHYLQNQEGFVHICRLDTAGARVVG.

91-101 (PIGSGLGSSAC) provides a ligand contact to ATP.

Belongs to the GHMP kinase family. Homoserine kinase subfamily.

The protein localises to the cytoplasm. It catalyses the reaction L-homoserine + ATP = O-phospho-L-homoserine + ADP + H(+). It participates in amino-acid biosynthesis; L-threonine biosynthesis; L-threonine from L-aspartate: step 4/5. In terms of biological role, catalyzes the ATP-dependent phosphorylation of L-homoserine to L-homoserine phosphate. This is Homoserine kinase from Salmonella paratyphi B (strain ATCC BAA-1250 / SPB7).